A 65-amino-acid polypeptide reads, in one-letter code: Beta-mammal toxin Tpa2 (65 aa).

The LCN-type CS-alpha/beta domain occupies 2–64 (KEGYLVGNDG…TWSRATNRCG (63 aa)). Cystine bridges form between cysteine 12–cysteine 63, cysteine 16–cysteine 38, cysteine 24–cysteine 44, and cysteine 28–cysteine 46.

Expressed by the venom gland.

The protein resides in the secreted. Beta toxins bind voltage-independently at site-4 of sodium channels (Nav) and shift the voltage of activation toward more negative potentials thereby affecting sodium channel activation and promoting spontaneous and repetitive firing. This toxin is lethal to mice. This Tityus pachyurus (Colombian scorpion) protein is Beta-mammal toxin Tpa2.